Reading from the N-terminus, the 221-residue chain is Transcription factor MYB1 (221 aa).

2 HTH myb-type domains span residues 1 to 57 (MESV…LNYL) and 58 to 112 (RPNI…QKKL). DNA-binding regions (H-T-H motif) lie at residues 33-57 (WHQV…LNYL) and 85-108 (WSLI…NTHL). The segment at 126–154 (KTIVPKGTEAQPRAHPKSPPRPSPPSNNE) is disordered.

As to expression, expressed in stems and leaves. Expressed at low levels in ovaries.

The protein resides in the nucleus. Functionally, transcription activator involved in the regulation of anthocyanin biosynthesis in red-fleshed kiwifruit varieties. Activates the transcription of genes involved in anthocyanin biosynthesis, such as dihydroflavonol reductase (DFR), anthocyanidin synthase (ANS) and UDP flavonoid glycosyltransferase (UFGT). The polypeptide is Transcription factor MYB1 (Actinidia chinensis var. chinensis (Chinese soft-hair kiwi)).